The following is a 155-amino-acid chain: SsrA-binding protein (155 aa).

The protein belongs to the SmpB family.

It localises to the cytoplasm. Required for rescue of stalled ribosomes mediated by trans-translation. Binds to transfer-messenger RNA (tmRNA), required for stable association of tmRNA with ribosomes. tmRNA and SmpB together mimic tRNA shape, replacing the anticodon stem-loop with SmpB. tmRNA is encoded by the ssrA gene; the 2 termini fold to resemble tRNA(Ala) and it encodes a 'tag peptide', a short internal open reading frame. During trans-translation Ala-aminoacylated tmRNA acts like a tRNA, entering the A-site of stalled ribosomes, displacing the stalled mRNA. The ribosome then switches to translate the ORF on the tmRNA; the nascent peptide is terminated with the 'tag peptide' encoded by the tmRNA and targeted for degradation. The ribosome is freed to recommence translation, which seems to be the essential function of trans-translation. This Bacillus cereus (strain 03BB102) protein is SsrA-binding protein.